The chain runs to 156 residues: Small ribosomal subunit protein uS7 (156 aa).

Belongs to the universal ribosomal protein uS7 family. In terms of assembly, part of the 30S ribosomal subunit. Contacts proteins S9 and S11.

Its function is as follows. One of the primary rRNA binding proteins, it binds directly to 16S rRNA where it nucleates assembly of the head domain of the 30S subunit. Is located at the subunit interface close to the decoding center, probably blocks exit of the E-site tRNA. In Sphingopyxis alaskensis (strain DSM 13593 / LMG 18877 / RB2256) (Sphingomonas alaskensis), this protein is Small ribosomal subunit protein uS7.